Here is a 252-residue protein sequence, read N- to C-terminus: Hydroxyacylglutathione hydrolase (252 aa).

Positions 54, 56, 58, 59, 111, 128, and 166 each coordinate Zn(2+).

It belongs to the metallo-beta-lactamase superfamily. Glyoxalase II family. In terms of assembly, monomer. Zn(2+) is required as a cofactor.

It carries out the reaction an S-(2-hydroxyacyl)glutathione + H2O = a 2-hydroxy carboxylate + glutathione + H(+). It functions in the pathway secondary metabolite metabolism; methylglyoxal degradation; (R)-lactate from methylglyoxal: step 2/2. In terms of biological role, thiolesterase that catalyzes the hydrolysis of S-D-lactoyl-glutathione to form glutathione and D-lactic acid. The sequence is that of Hydroxyacylglutathione hydrolase from Vibrio vulnificus (strain CMCP6).